Reading from the N-terminus, the 415-residue chain is DNA primase DnaG (415 aa).

The Toprim domain maps to 171-250 (DAIIIVEGRA…AFSPRGKSVE (80 aa)). Residues glutamate 177, aspartate 219, and aspartate 221 each contribute to the Mg(2+) site. Residues 280-323 (ELPGDLGGRPARTAPAHDEGGNSDTTGKQAVSQKRIRDGTSKVP) form a disordered region. Residues 301 to 311 (NSDTTGKQAVS) are compositionally biased toward polar residues.

This sequence belongs to the archaeal DnaG primase family. As to quaternary structure, forms a ternary complex with MCM helicase and DNA. The cofactor is Mg(2+).

It carries out the reaction ssDNA + n NTP = ssDNA/pppN(pN)n-1 hybrid + (n-1) diphosphate.. In terms of biological role, RNA polymerase that catalyzes the synthesis of short RNA molecules used as primers for DNA polymerase during DNA replication. This Methanoregula boonei (strain DSM 21154 / JCM 14090 / 6A8) protein is DNA primase DnaG.